A 629-amino-acid polypeptide reads, in one-letter code: 1-deoxy-D-xylulose-5-phosphate synthase (629 aa).

Thiamine diphosphate contacts are provided by residues histidine 72 and 113 to 115 (GHA). Residue aspartate 144 participates in Mg(2+) binding. Thiamine diphosphate contacts are provided by residues 145-146 (GA), asparagine 174, tyrosine 287, and glutamate 370. Asparagine 174 provides a ligand contact to Mg(2+).

It belongs to the transketolase family. DXPS subfamily. As to quaternary structure, homodimer. Mg(2+) is required as a cofactor. It depends on thiamine diphosphate as a cofactor.

The catalysed reaction is D-glyceraldehyde 3-phosphate + pyruvate + H(+) = 1-deoxy-D-xylulose 5-phosphate + CO2. Its pathway is metabolic intermediate biosynthesis; 1-deoxy-D-xylulose 5-phosphate biosynthesis; 1-deoxy-D-xylulose 5-phosphate from D-glyceraldehyde 3-phosphate and pyruvate: step 1/1. Functionally, catalyzes the acyloin condensation reaction between C atoms 2 and 3 of pyruvate and glyceraldehyde 3-phosphate to yield 1-deoxy-D-xylulose-5-phosphate (DXP). This chain is 1-deoxy-D-xylulose-5-phosphate synthase, found in Prochlorococcus marinus (strain MIT 9301).